The following is a 341-amino-acid chain: Glycerol-3-phosphate dehydrogenase [NAD(P)+] (341 aa).

The NADPH site is built by serine 15, tryptophan 16, arginine 36, and lysine 110. Lysine 110, glycine 139, and serine 141 together coordinate sn-glycerol 3-phosphate. NADPH is bound at residue alanine 143. Positions 194, 247, 257, 258, and 259 each coordinate sn-glycerol 3-phosphate. Lysine 194 (proton acceptor) is an active-site residue. Arginine 258 provides a ligand contact to NADPH. NADPH contacts are provided by valine 282 and glutamate 284.

It belongs to the NAD-dependent glycerol-3-phosphate dehydrogenase family.

Its subcellular location is the cytoplasm. It catalyses the reaction sn-glycerol 3-phosphate + NAD(+) = dihydroxyacetone phosphate + NADH + H(+). The catalysed reaction is sn-glycerol 3-phosphate + NADP(+) = dihydroxyacetone phosphate + NADPH + H(+). It functions in the pathway membrane lipid metabolism; glycerophospholipid metabolism. Functionally, catalyzes the reduction of the glycolytic intermediate dihydroxyacetone phosphate (DHAP) to sn-glycerol 3-phosphate (G3P), the key precursor for phospholipid synthesis. The protein is Glycerol-3-phosphate dehydrogenase [NAD(P)+] of Xanthomonas euvesicatoria pv. vesicatoria (strain 85-10) (Xanthomonas campestris pv. vesicatoria).